The chain runs to 143 residues: Large ribosomal subunit protein uL11 (143 aa).

The protein belongs to the universal ribosomal protein uL11 family. In terms of assembly, part of the ribosomal stalk of the 50S ribosomal subunit. Interacts with L10 and the large rRNA to form the base of the stalk. L10 forms an elongated spine to which 2 L12 dimers bind in a sequential fashion forming a pentameric L10(L12)2(L12)2 complex. Post-translationally, one or more lysine residues are methylated.

Forms part of the ribosomal stalk which helps the ribosome interact with GTP-bound translation factors. This Agrobacterium fabrum (strain C58 / ATCC 33970) (Agrobacterium tumefaciens (strain C58)) protein is Large ribosomal subunit protein uL11.